A 670-amino-acid chain; its full sequence is Zinc finger protein 233 (670 aa).

The KRAB domain occupies 8-79 (VTFKDVAVVF…ETEIQGDGCS (72 aa)). The C2H2-type 1; degenerate zinc-finger motif lies at 258-280 (QTSDENGKGLSVGSNLELHQQLH). The C2H2-type 2; degenerate zinc finger occupies 311–336 (EKCYRNGDSGEGFSQGSHLQPHQRVS). The C2H2-type 3; degenerate zinc-finger motif lies at 342–364 (YRCQVYARSSNQNSCLPSHELTH). Residues 370 to 392 (CTCGRCGKGFHHSLDFDIHCVDS) form a C2H2-type 4; degenerate zinc finger. Residues 398-420 (CKCDVYDKGFSQTSQLQAHQRGH) form a C2H2-type 5; degenerate zinc finger. 7 consecutive C2H2-type zinc fingers follow at residues 452-474 (YKCE…QRIH), 480-502 (YKCD…QRVH), 508-530 (YKCD…QRVH), 536-558 (YKCE…QQVH), 564-586 (YKCD…QRVH), 592-614 (YKCE…QRIH), and 620-642 (YKCG…QRVH).

Belongs to the krueppel C2H2-type zinc-finger protein family.

Its subcellular location is the nucleus. In terms of biological role, may be involved in transcriptional regulation. The protein is Zinc finger protein 233 (ZNF233) of Homo sapiens (Human).